Reading from the N-terminus, the 252-residue chain is Major prion protein (252 aa).

Residues 1–22 form the signal peptide; the sequence is MANLGYWMLVLFVATWSDLGLC. The interaction with GRB2, ERI3 and SYN1 stretch occupies residues 23 to 229; it reads KKRPKPGGWN…ESQAYYQRGS (207 aa). A disordered region spans residues 26–104; sequence PKPGGWNTGG…HNQWNKPSKP (79 aa). 5 tandem repeats follow at residues 51 to 58, 59 to 66, 67 to 74, 75 to 82, and 83 to 90. Residues 51–90 are 5 X 8 AA tandem repeats of P-H-G-G-G-W-G-Q; the sequence is PQGGGWGQPHGGGWGQPHGGGWGQPHGGGWGQPHGGGWGQ. The span at 52–92 shows a compositional bias: gly residues; that stretch reads QGGGWGQPHGGGWGQPHGGGWGQPHGGGWGQPHGGGWGQAG. Cu(2+) is bound by residues histidine 60, glycine 61, glycine 62, histidine 68, glycine 69, glycine 70, histidine 76, glycine 77, glycine 78, histidine 84, glycine 85, and glycine 86. Cysteine 178 and cysteine 213 are disulfide-bonded. N-linked (GlcNAc...) asparagine glycans are attached at residues asparagine 180 and asparagine 196. Residue serine 229 is the site of GPI-anchor amidated serine attachment. A propeptide spans 230–252 (removed in mature form); it reads SMVLFSSPPVILLISFLIFLIVG.

The protein belongs to the prion family. Monomer and homodimer. Has a tendency to aggregate into amyloid fibrils containing a cross-beta spine, formed by a steric zipper of superposed beta-strands. Soluble oligomers may represent an intermediate stage on the path to fibril formation. Copper binding may promote oligomerization. Interacts with GRB2, APP, ERI3/PRNPIP and SYN1. Mislocalized cytosolically exposed PrP interacts with MGRN1; this interaction alters MGRN1 subcellular location and causes lysosomal enlargement. Interacts with KIAA1191.

The protein localises to the cell membrane. The protein resides in the golgi apparatus. Functionally, its primary physiological function is unclear. Has cytoprotective activity against internal or environmental stresses. May play a role in neuronal development and synaptic plasticity. May be required for neuronal myelin sheath maintenance. May play a role in iron uptake and iron homeostasis. Soluble oligomers are toxic to cultured neuroblastoma cells and induce apoptosis (in vitro). Association with GPC1 (via its heparan sulfate chains) targets PRNP to lipid rafts. Also provides Cu(2+) or Zn(2+) for the ascorbate-mediated GPC1 deaminase degradation of its heparan sulfate side chains. The protein is Major prion protein (PRNP) of Ateles paniscus (Black spider monkey).